The sequence spans 390 residues: MKFVDEATIKVDAGDGGNGVVSFWREKFVAKGGPDGGDGGDGGDVYLEADENLNTLIDYRFNRFYNAERGKNGSGGNCTGKRGEDITLKVPVGTRAIDIDTGEKVAELMTHGMKQMVAKGGWHGLGNTRFKSSVNRAPRQKTLGTKGEVRELRLELLLLADVGMLGLPNAGKSTFIRAVSAAKPKVADYPFTTLIPSLGVVRARGNKSFVVADIPGLIEGAADGAGLGVRFLKHLERCRVLLHVIDILPIDGSDPVQNALTIIDELEQYSEKVAGKPRWLLFNKTDLLLEEEADEKINEILEALAWEDRYFKIAAVSRTGTQELCDELADFMDTLPKEIQTEEEKAANKVDFMWDDYHKDAMSGKDVVTEDDWDDWDDEEDDGHVIYVRD.

Residues 1–159 form the Obg domain; the sequence is MKFVDEATIK…RELRLELLLL (159 aa). In terms of domain architecture, OBG-type G spans 160-333; that stretch reads ADVGMLGLPN…LCDELADFMD (174 aa). GTP-binding positions include 166 to 173, 191 to 195, 213 to 216, 283 to 286, and 314 to 316; these read GLPNAGKS, FTTLI, DIPG, NKTD, and AAV. The Mg(2+) site is built by serine 173 and threonine 193.

Belongs to the TRAFAC class OBG-HflX-like GTPase superfamily. OBG GTPase family. Monomer. Mg(2+) is required as a cofactor.

The protein localises to the cytoplasm. In terms of biological role, an essential GTPase which binds GTP, GDP and possibly (p)ppGpp with moderate affinity, with high nucleotide exchange rates and a fairly low GTP hydrolysis rate. Plays a role in control of the cell cycle, stress response, ribosome biogenesis and in those bacteria that undergo differentiation, in morphogenesis control. The sequence is that of GTPase Obg from Aliivibrio fischeri (strain MJ11) (Vibrio fischeri).